The chain runs to 295 residues: MEIRRRPPNPKVKVANLEYAIPHEDGEPRNILEKILWEKDREVKVSRERVPLSELKAQINNLPQTKDFLGALRQSSTSPAVIAEIKKASPSKGVIRENFDPIEIALAYKLGGATCLSVLTDKSFFQGGFEVLVQVRKTVDLPLLCKEFIIQPYQIYQARVAGADAVLLIAAILSDQDLLYLRKVAISLGLTILVEVHDSNELKRVLDLEGFPLVGINNRDLKTFNTDLRTTKEVVKEHKKRISEQEVLLVSESGLFNSADLEEVSSYGAKAVLVGESLMRQPDIGLALKNLQGFK.

Belongs to the TrpC family.

It catalyses the reaction 1-(2-carboxyphenylamino)-1-deoxy-D-ribulose 5-phosphate + H(+) = (1S,2R)-1-C-(indol-3-yl)glycerol 3-phosphate + CO2 + H2O. The protein operates within amino-acid biosynthesis; L-tryptophan biosynthesis; L-tryptophan from chorismate: step 4/5. The polypeptide is Indole-3-glycerol phosphate synthase (Prochlorococcus marinus (strain MIT 9211)).